The sequence spans 340 residues: MKHSLHKIIERQDLSTEEIKEVFKHCFSQEVSDSELAAILISLKMKGETAEEVAGLSQVIQEHSPFLLNFHQPVMDNCGTGGDRSNSFNISTCSAFVLAGAGVTVAKHGNRSVSSQTGSADVLEKLGVSLAFTKEQVNEMLDKNQIAFLFAQHVHPTLKQVGKVRKDLRIPTIFNFIGPLTNPVHLDSQYIGVYDPEALQMVAKAAQLLGRERAIVIHGAGGLDEASLQGENKYILVENDRLEEKTIHPEEVGLSVYPNDEIQGGNATENANILLSVLKGEDSAYLDTVLFNAGIALFASKKADSIYDGVELARESITSGSALSKLNNLITFSKKVSEVV.

Residues Gly-79, 82-83 (GD), Ser-87, 89-92 (NIST), 107-115 (KHGNRSVSS), and Ser-119 each bind 5-phospho-alpha-D-ribose 1-diphosphate. Gly-79 contacts anthranilate. Residue Ser-91 participates in Mg(2+) binding. Position 110 (Asn-110) interacts with anthranilate. Residue Arg-165 participates in anthranilate binding. The Mg(2+) site is built by Asp-224 and Glu-225.

Belongs to the anthranilate phosphoribosyltransferase family. Homodimer. It depends on Mg(2+) as a cofactor.

It catalyses the reaction N-(5-phospho-beta-D-ribosyl)anthranilate + diphosphate = 5-phospho-alpha-D-ribose 1-diphosphate + anthranilate. It participates in amino-acid biosynthesis; L-tryptophan biosynthesis; L-tryptophan from chorismate: step 2/5. Catalyzes the transfer of the phosphoribosyl group of 5-phosphorylribose-1-pyrophosphate (PRPP) to anthranilate to yield N-(5'-phosphoribosyl)-anthranilate (PRA). The sequence is that of Anthranilate phosphoribosyltransferase from Oceanobacillus iheyensis (strain DSM 14371 / CIP 107618 / JCM 11309 / KCTC 3954 / HTE831).